We begin with the raw amino-acid sequence, 354 residues long: Uroporphyrinogen decarboxylase (354 aa).

Substrate-binding positions include 27–31, phenylalanine 46, aspartate 77, tyrosine 153, threonine 208, and histidine 326; that span reads RQAGR.

This sequence belongs to the uroporphyrinogen decarboxylase family. In terms of assembly, homodimer.

The protein resides in the cytoplasm. It catalyses the reaction uroporphyrinogen III + 4 H(+) = coproporphyrinogen III + 4 CO2. Its pathway is porphyrin-containing compound metabolism; protoporphyrin-IX biosynthesis; coproporphyrinogen-III from 5-aminolevulinate: step 4/4. Catalyzes the decarboxylation of four acetate groups of uroporphyrinogen-III to yield coproporphyrinogen-III. This Neisseria meningitidis serogroup A / serotype 4A (strain DSM 15465 / Z2491) protein is Uroporphyrinogen decarboxylase.